We begin with the raw amino-acid sequence, 156 residues long: Ribosomal RNA large subunit methyltransferase H (156 aa).

Residues leucine 73, glycine 104, and 123-128 (LSALTL) each bind S-adenosyl-L-methionine.

The protein belongs to the RNA methyltransferase RlmH family. As to quaternary structure, homodimer.

The protein localises to the cytoplasm. The catalysed reaction is pseudouridine(1915) in 23S rRNA + S-adenosyl-L-methionine = N(3)-methylpseudouridine(1915) in 23S rRNA + S-adenosyl-L-homocysteine + H(+). In terms of biological role, specifically methylates the pseudouridine at position 1915 (m3Psi1915) in 23S rRNA. The chain is Ribosomal RNA large subunit methyltransferase H from Shewanella baltica (strain OS223).